A 642-amino-acid chain; its full sequence is MSSQFFLKTSQDIELFQSYPTFEQSNTNSKDFPVISSVLSPCGRFLALSTKENVKVFTGPCLDNVLLTMKLSDVYDLHFSPAGNYLSTWERASIQDPNHKNVKVWYLNKPFKKDCVSEDIVPAYEYQAKSQSGWFLQFSKLDNYGLRLFKHDLKIVKLSSANADNFDFQSPFAVLSDDETSQHFTTYLISPAEHPTICTFTPEKGGKPAQLIIWALSEGKITKKIASKTFFKADSCQLKWNPLGNAILCLAITDFDSSNKSYYGENTLYLLSFQGVNGTLGGNSVRVSLTTGPVHDFTWSPTSRQFGVIAGYMPATISFFDLRGNVVHSLPQQAKNTMLFSPSGHYILIAGFGNLQGSVEILDRLDKFKCVSKFDATNTSVCKWSPGGEFIMTATTSPRLRVDNGVKIWHVSGSLVFVKEFKELLKVDWRSPCNYKTLENKDEAFFENHIINNWEPLPDSTTSSLDPKISNKSELQIHSSVQEYISQHPSREASSNGNGSKAKAGGAYKPPHARRTGGGRIVPGVPPGAAKKTIPGLVPGMSANKDANTKNRRRRANKKSSETSPDSTPAPSAPASTNAPTNNKETSPEEKKIRSLLKKLRAIETLKERQAVGDKLEDTQVLKIQTEEKVLKDLEKLGWKDE.

WD repeat units follow at residues 69–115, 186–224, 289–331, and 374–419; these read MKLS…KKDC, TYLISPAEHPTICTFTPEKGGKPAQLIIWALSEGKITKK, LTTG…HSLP, and FDAT…VFVK. A disordered region spans residues 485-593; sequence ISQHPSREAS…KETSPEEKKI (109 aa). Low complexity-rich tracts occupy residues 493–507 and 563–583; these read ASSNGNGSKAKAGGA and TSPDSTPAPSAPASTNAPTNN. 3 positions are modified to phosphoserine: Ser564, Ser567, and Ser572.

It belongs to the WD repeat EIF2A family. In terms of processing, ubiquitinated, probably leading to its degradation. May explain why it has a short half-life of 17 minutes.

Functions in the early steps of protein synthesis of a small number of specific mRNAs. Acts by directing the binding of methionyl-tRNAi to 40S ribosomal subunits. In contrast to the eIF-2 complex, it binds methionyl-tRNAi to 40S subunits in a codon-dependent manner, whereas the eIF-2 complex binds methionyl-tRNAi to 40S subunits in a GTP-dependent manner. Specifically associates with both 40S subunits and 80S ribosomes. The chain is Eukaryotic translation initiation factor 2A from Saccharomyces cerevisiae (strain ATCC 204508 / S288c) (Baker's yeast).